A 22-amino-acid chain; its full sequence is Thylakoid lumenal 11 kDa protein (22 aa).

Residues 1-22 (FKGGGPYGQGVTRGQDLSGKDF) form a disordered region.

This sequence to A.thaliana At2g44920.

The protein resides in the plastid. Its subcellular location is the chloroplast thylakoid lumen. The protein is Thylakoid lumenal 11 kDa protein of Spinacia oleracea (Spinach).